A 713-amino-acid polypeptide reads, in one-letter code: Putative ERAD-associated E3 ubiquitin-protein ligase component (713 aa).

An N-terminal signal peptide occupies residues 1-20 (MQLLNFLICLFFIFKRCVFT). Asn48 and Asn123 each carry an N-linked (GlcNAc...) asparagine glycan. 2 Sel1-like repeats span residues 83–124 (PESQ…TQNY) and 125–160 (TYALLALAYKHLNGLSTPMSVDKGVELYKQVAHQIS). A glycan (N-linked (GlcNAc...) asparagine) is linked at Asn211. Sel1-like repeat units lie at residues 212–248 (ISAHISLATIYQYGTPGKLKDIKLAVKHYLAAIRLVN), 280–315 (SIAAFRLGCMALHGELGKPDPSLAYAWFEYGVSLNH), 490–525 (IHSLIKIGDFYRMGLGTSAKPELAFSYYSQAAAIHP), and 527–562 (ALAYWRLGWMHEYGVGVPVDFEMAKKNYDNALMHDT). A glycan (N-linked (GlcNAc...) asparagine) is linked at Asn314. The tract at residues 621–655 (QLPPEPPTLQVDRTPQQPDPQETSESLPSPNTEEM) is disordered. The span at 631 to 652 (VDRTPQQPDPQETSESLPSPNT) shows a compositional bias: polar residues. Residues 671 to 691 (GRFLETACVTLIVVVVGLVLM) traverse the membrane as a helical segment.

Belongs to the sel-1 family.

The protein localises to the endoplasmic reticulum membrane. Functionally, component of the endoplasmic reticulum quality control (ERQC) system involved in ubiquitin-dependent degradation of missfolded endoplasmic reticulum proteins. This Schizosaccharomyces pombe (strain 972 / ATCC 24843) (Fission yeast) protein is Putative ERAD-associated E3 ubiquitin-protein ligase component.